Consider the following 139-residue polypeptide: UPF0310 protein RSal33209_2865 (139 aa).

Belongs to the UPF0310 family.

The sequence is that of UPF0310 protein RSal33209_2865 from Renibacterium salmoninarum (strain ATCC 33209 / DSM 20767 / JCM 11484 / NBRC 15589 / NCIMB 2235).